A 1112-amino-acid polypeptide reads, in one-letter code: DNA polymerase II large subunit (1112 aa).

It belongs to the archaeal DNA polymerase II family. As to quaternary structure, heterodimer of a large subunit and a small subunit.

The enzyme catalyses DNA(n) + a 2'-deoxyribonucleoside 5'-triphosphate = DNA(n+1) + diphosphate. It catalyses the reaction Exonucleolytic cleavage in the 3'- to 5'-direction to yield nucleoside 5'-phosphates.. In terms of biological role, possesses two activities: a DNA synthesis (polymerase) and an exonucleolytic activity that degrades single-stranded DNA in the 3'- to 5'-direction. Has a template-primer preference which is characteristic of a replicative DNA polymerase. In Cenarchaeum symbiosum (strain A), this protein is DNA polymerase II large subunit.